The following is a 573-amino-acid chain: DNA ligase (573 aa).

Position 250 (Glu-250) interacts with ATP. The N6-AMP-lysine intermediate role is filled by Lys-252. Arg-257, Arg-272, Glu-301, Phe-342, Arg-432, and Lys-438 together coordinate ATP.

The protein belongs to the ATP-dependent DNA ligase family. Mg(2+) is required as a cofactor.

The catalysed reaction is ATP + (deoxyribonucleotide)n-3'-hydroxyl + 5'-phospho-(deoxyribonucleotide)m = (deoxyribonucleotide)n+m + AMP + diphosphate.. Functionally, DNA ligase that seals nicks in double-stranded DNA during DNA replication, DNA recombination and DNA repair. In Methanococcus maripaludis (strain C7 / ATCC BAA-1331), this protein is DNA ligase.